Consider the following 77-residue polypeptide: Anionic peptide 17.1 (77 aa).

The first 24 residues, M1 to A24, serve as a signal peptide directing secretion.

This sequence belongs to the non-disulfide-bridged peptide (NDBP) superfamily. Long chain multifunctional peptide (group 2) family. In terms of tissue distribution, expressed by the venom gland.

The protein resides in the secreted. The chain is Anionic peptide 17.1 from Lychas mucronatus (Chinese swimming scorpion).